The sequence spans 237 residues: MPKHGKKYLAALAKVDRSRFYTPAEAIALVKETSYTKFDATVEAHLRLGIDPRHADQNIRTTVALPHGTGKTVRVLVFAQGEALQTALDAGADYAGSDDLIARIDRENFFDFDVAIATPDMMGKVGRIGRKLGPRGLMPNPKSGTVVQPADLARTIREVKGGRVEIRNDKTGILHVAIGKVSFTSQQLSENLAALMEAVKAAKPSGAKGTYIRSVTLTSTMGPGVPVDLVAVQNLKL.

It belongs to the universal ribosomal protein uL1 family. As to quaternary structure, part of the 50S ribosomal subunit.

Its function is as follows. Binds directly to 23S rRNA. The L1 stalk is quite mobile in the ribosome, and is involved in E site tRNA release. Functionally, protein L1 is also a translational repressor protein, it controls the translation of the L11 operon by binding to its mRNA. This chain is Large ribosomal subunit protein uL1, found in Chloroflexus aggregans (strain MD-66 / DSM 9485).